The chain runs to 452 residues: UDP-glycosyltransferase 79B11 (452 aa).

UDP-alpha-D-glucose-binding positions include Ser-260, 319 to 325 (VQQPSWQ), 340 to 348 (HCGFGSMWE), and 362 to 365 (LNDQ).

Belongs to the UDP-glycosyltransferase family.

The polypeptide is UDP-glycosyltransferase 79B11 (UGT79B11) (Arabidopsis thaliana (Mouse-ear cress)).